The following is a 370-amino-acid chain: MAISYQLEQTSSESRARLGKLKTPRGEIQTPVFMPVGTQATVKTMTPEELKNLDAEIILGNTYHLHLRPGNDIVREADGLHKFMNWDRPILTDSGGFQVFSLGKLRQISEQGVEFRSHIDGSKLFMTPEKSIEIQEDLGSDIMMVFDECPPYPAEYDYVKESMDRTIRWSKRCLQHQKHPEKQALFGIVQGGMYPELRKESALKTTELDFPGYAVGGLSVGEPKEMMLEVLNTTIPYLPEEKPRYLMGVGTPDYIIEAVRMGIDMFDCVYPTRVARNGTAMTRFGNLTVRNAVFQRDFQPIEEDCDCYVCQNYSRAYLRHLIKANEILGFRLLTWHNLFFLIKLIKELRQAIADDNFLAWRDSFYKNYQN.

The active-site Proton acceptor is the Asp93. Residues 93–97 (DSGGF), Asp147, Gln190, and Gly217 contribute to the substrate site. The tract at residues 248 to 254 (GVGTPDY) is RNA binding. Asp267 acts as the Nucleophile in catalysis. The RNA binding; important for wobble base 34 recognition stretch occupies residues 272-276 (TRVAR). Cys305, Cys307, Cys310, and His336 together coordinate Zn(2+).

This sequence belongs to the queuine tRNA-ribosyltransferase family. Homodimer. Within each dimer, one monomer is responsible for RNA recognition and catalysis, while the other monomer binds to the replacement base PreQ1. It depends on Zn(2+) as a cofactor.

It catalyses the reaction 7-aminomethyl-7-carbaguanine + guanosine(34) in tRNA = 7-aminomethyl-7-carbaguanosine(34) in tRNA + guanine. It functions in the pathway tRNA modification; tRNA-queuosine biosynthesis. Its function is as follows. Catalyzes the base-exchange of a guanine (G) residue with the queuine precursor 7-aminomethyl-7-deazaguanine (PreQ1) at position 34 (anticodon wobble position) in tRNAs with GU(N) anticodons (tRNA-Asp, -Asn, -His and -Tyr). Catalysis occurs through a double-displacement mechanism. The nucleophile active site attacks the C1' of nucleotide 34 to detach the guanine base from the RNA, forming a covalent enzyme-RNA intermediate. The proton acceptor active site deprotonates the incoming PreQ1, allowing a nucleophilic attack on the C1' of the ribose to form the product. After dissociation, two additional enzymatic reactions on the tRNA convert PreQ1 to queuine (Q), resulting in the hypermodified nucleoside queuosine (7-(((4,5-cis-dihydroxy-2-cyclopenten-1-yl)amino)methyl)-7-deazaguanosine). This Natranaerobius thermophilus (strain ATCC BAA-1301 / DSM 18059 / JW/NM-WN-LF) protein is Queuine tRNA-ribosyltransferase.